The primary structure comprises 173 residues: Inorganic pyrophosphatase (173 aa).

Residues Lys29, Arg43, and Tyr55 each coordinate substrate. Residues Asp65, Asp70, and Asp102 each contribute to the Mg(2+) site. Tyr141 contacts substrate.

Belongs to the PPase family. Homohexamer. The cofactor is Mg(2+).

The protein localises to the cytoplasm. It carries out the reaction diphosphate + H2O = 2 phosphate + H(+). Catalyzes the hydrolysis of inorganic pyrophosphate (PPi) forming two phosphate ions. This Rickettsia felis (strain ATCC VR-1525 / URRWXCal2) (Rickettsia azadi) protein is Inorganic pyrophosphatase.